We begin with the raw amino-acid sequence, 869 residues long: Protein translocase subunit SecA (869 aa).

Residues Q85, 103-107 (GEGKT), and D508 contribute to the ATP site.

This sequence belongs to the SecA family. Monomer and homodimer. Part of the essential Sec protein translocation apparatus which comprises SecA, SecYEG and auxiliary proteins SecDF. Other proteins may also be involved.

The protein localises to the cell membrane. It localises to the cytoplasm. It catalyses the reaction ATP + H2O + cellular proteinSide 1 = ADP + phosphate + cellular proteinSide 2.. In terms of biological role, part of the Sec protein translocase complex. Interacts with the SecYEG preprotein conducting channel. Has a central role in coupling the hydrolysis of ATP to the transfer of proteins into and across the cell membrane, serving as an ATP-driven molecular motor driving the stepwise translocation of polypeptide chains across the membrane. This is Protein translocase subunit SecA from Deinococcus deserti (strain DSM 17065 / CIP 109153 / LMG 22923 / VCD115).